Consider the following 239-residue polypeptide: Urease accessory protein UreE (239 aa).

The interval 185–239 (VASPLDEPHGSGLHIHGIHSHGDGHSHSHDSHSHSHDSDHGHSHSHGDHDHDHKH) is disordered. Residues 204-239 (SHGDGHSHSHDSHSHSHDSDHGHSHSHGDHDHDHKH) are compositionally biased toward basic and acidic residues.

Belongs to the UreE family.

It localises to the cytoplasm. Functionally, involved in urease metallocenter assembly. Binds nickel. Probably functions as a nickel donor during metallocenter assembly. The sequence is that of Urease accessory protein UreE from Yersinia frederiksenii.